The chain runs to 129 residues: MARQIKRAANKKKKTAPTGVAHIQSTFNNTIVTITTVTGETVSWASSGAIGFKGAKKGTPFAAQIAAEKASKEAMSQGMKKAEVLVNGPGAGRETAVRALQAAGLEITLIRDITPVPHNGCRPPKKRRV.

Belongs to the universal ribosomal protein uS11 family. As to quaternary structure, part of the 30S ribosomal subunit.

The protein resides in the plastid. It is found in the chloroplast. The protein is Small ribosomal subunit protein uS11c of Rhodomonas salina (Cryptomonas salina).